We begin with the raw amino-acid sequence, 20 residues long: Thrombin-like enzyme okinaxobin-2 (20 aa).

One can recognise a Peptidase S1 domain in the interval 1 to 20 (VVGGDECNINEHRFLVALYY).

This sequence belongs to the peptidase S1 family. Snake venom subfamily. Monomer. Glycosylated. As to expression, expressed by the venom gland.

Its subcellular location is the secreted. With respect to regulation, strongly inactivated by diisopropylfluorophosphate (DFP) and to a lesser extent by tosyl-L-lysine chloromethyl ketone (TLCK). In terms of biological role, thrombin-like snake venom serine protease. Releases both fibrinopeptides A and B from fibrinogen (FGA and FGB) to form fibrin clots. This Ovophis okinavensis (Ryukyu Island pit viper) protein is Thrombin-like enzyme okinaxobin-2.